Reading from the N-terminus, the 215-residue chain is Cytochrome b6 (215 aa).

The chain crosses the membrane as a helical span at residues 32–52 (IFYCLGGITLTCFLVQVATGF). Cys35 provides a ligand contact to heme c. The heme b site is built by His86 and His100. 3 helical membrane passes run 90–110 (ASMM…TGGF), 116–136 (LTWV…VTGY), and 186–206 (LHTF…FPMI). Positions 187 and 202 each coordinate heme b.

It belongs to the cytochrome b family. PetB subfamily. In terms of assembly, the 4 large subunits of the cytochrome b6-f complex are cytochrome b6, subunit IV (17 kDa polypeptide, PetD), cytochrome f and the Rieske protein, while the 4 small subunits are PetG, PetL, PetM and PetN. The complex functions as a dimer. The cofactor is heme b. It depends on heme c as a cofactor.

It is found in the plastid. It localises to the chloroplast thylakoid membrane. In terms of biological role, component of the cytochrome b6-f complex, which mediates electron transfer between photosystem II (PSII) and photosystem I (PSI), cyclic electron flow around PSI, and state transitions. This Agrostis stolonifera (Creeping bentgrass) protein is Cytochrome b6.